We begin with the raw amino-acid sequence, 124 residues long: S-adenosylmethionine decarboxylase proenzyme (124 aa).

S70 serves as the catalytic Schiff-base intermediate with substrate; via pyruvic acid. S70 carries the post-translational modification Pyruvic acid (Ser); by autocatalysis. The Proton acceptor; for processing activity role is filled by H75. C90 acts as the Proton donor; for catalytic activity in catalysis.

Belongs to the prokaryotic AdoMetDC family. Type 1 subfamily. Heterotetramer of two alpha and two beta chains arranged as a dimer of alpha/beta heterodimers. Requires pyruvate as cofactor. Is synthesized initially as an inactive proenzyme. Formation of the active enzyme involves a self-maturation process in which the active site pyruvoyl group is generated from an internal serine residue via an autocatalytic post-translational modification. Two non-identical subunits are generated from the proenzyme in this reaction, and the pyruvate is formed at the N-terminus of the alpha chain, which is derived from the carboxyl end of the proenzyme. The post-translation cleavage follows an unusual pathway, termed non-hydrolytic serinolysis, in which the side chain hydroxyl group of the serine supplies its oxygen atom to form the C-terminus of the beta chain, while the remainder of the serine residue undergoes an oxidative deamination to produce ammonia and the pyruvoyl group blocking the N-terminus of the alpha chain.

It carries out the reaction S-adenosyl-L-methionine + H(+) = S-adenosyl 3-(methylsulfanyl)propylamine + CO2. It participates in amine and polyamine biosynthesis; S-adenosylmethioninamine biosynthesis; S-adenosylmethioninamine from S-adenosyl-L-methionine: step 1/1. Functionally, catalyzes the decarboxylation of S-adenosylmethionine to S-adenosylmethioninamine (dcAdoMet), the propylamine donor required for the synthesis of the polyamines spermine and spermidine from the diamine putrescine. The sequence is that of S-adenosylmethionine decarboxylase proenzyme from Pyrobaculum neutrophilum (strain DSM 2338 / JCM 9278 / NBRC 100436 / V24Sta) (Thermoproteus neutrophilus).